A 434-amino-acid chain; its full sequence is Methylenetetrahydrofolate--tRNA-(uracil-5-)-methyltransferase TrmFO (434 aa).

Residue 9–14 coordinates FAD; that stretch reads GAGLAG.

Belongs to the MnmG family. TrmFO subfamily. FAD serves as cofactor.

The protein localises to the cytoplasm. The enzyme catalyses uridine(54) in tRNA + (6R)-5,10-methylene-5,6,7,8-tetrahydrofolate + NADH + H(+) = 5-methyluridine(54) in tRNA + (6S)-5,6,7,8-tetrahydrofolate + NAD(+). The catalysed reaction is uridine(54) in tRNA + (6R)-5,10-methylene-5,6,7,8-tetrahydrofolate + NADPH + H(+) = 5-methyluridine(54) in tRNA + (6S)-5,6,7,8-tetrahydrofolate + NADP(+). Its function is as follows. Catalyzes the folate-dependent formation of 5-methyl-uridine at position 54 (M-5-U54) in all tRNAs. The chain is Methylenetetrahydrofolate--tRNA-(uracil-5-)-methyltransferase TrmFO from Listeria innocua serovar 6a (strain ATCC BAA-680 / CLIP 11262).